Consider the following 298-residue polypeptide: NFU1 iron-sulfur cluster scaffold homolog, mitochondrial (298 aa).

The interval 194–262 (IKELLDTRIR…IPEVESVEQV (69 aa)) is nifU. Positions 231 and 234 each coordinate [4Fe-4S] cluster.

This sequence belongs to the NifU family.

It localises to the mitochondrion. In terms of biological role, molecular scaffold for [Fe-S] cluster assembly of mitochondrial iron-sulfur proteins. This chain is NFU1 iron-sulfur cluster scaffold homolog, mitochondrial, found in Drosophila grimshawi (Hawaiian fruit fly).